The sequence spans 99 residues: Large ribosomal subunit protein bL28 (99 aa).

The protein belongs to the bacterial ribosomal protein bL28 family.

In Rhodospirillum rubrum (strain ATCC 11170 / ATH 1.1.1 / DSM 467 / LMG 4362 / NCIMB 8255 / S1), this protein is Large ribosomal subunit protein bL28.